A 377-amino-acid polypeptide reads, in one-letter code: Succinyl-diaminopimelate desuccinylase (377 aa).

Residue H66 participates in Zn(2+) binding. D68 is an active-site residue. D99 lines the Zn(2+) pocket. The active-site Proton acceptor is the E133. Zn(2+) contacts are provided by E134, E162, and H348.

It belongs to the peptidase M20A family. DapE subfamily. Homodimer. It depends on Zn(2+) as a cofactor. Co(2+) is required as a cofactor.

It catalyses the reaction N-succinyl-(2S,6S)-2,6-diaminopimelate + H2O = (2S,6S)-2,6-diaminopimelate + succinate. Its pathway is amino-acid biosynthesis; L-lysine biosynthesis via DAP pathway; LL-2,6-diaminopimelate from (S)-tetrahydrodipicolinate (succinylase route): step 3/3. In terms of biological role, catalyzes the hydrolysis of N-succinyl-L,L-diaminopimelic acid (SDAP), forming succinate and LL-2,6-diaminopimelate (DAP), an intermediate involved in the bacterial biosynthesis of lysine and meso-diaminopimelic acid, an essential component of bacterial cell walls. The chain is Succinyl-diaminopimelate desuccinylase from Xylella fastidiosa (strain M23).